Consider the following 254-residue polypeptide: Adenosylcobinamide-GDP ribazoletransferase (254 aa).

The next 6 helical transmembrane spans lie at 28 to 48 (FRQT…IVAL), 62 to 81 (IGVY…IDGI), 109 to 129 (VGVG…LGVL), 138 to 158 (VTFI…ALLV), 179 to 199 (LSLF…PYLG), and 200 to 220 (ASPT…IKQW).

This sequence belongs to the CobS family. Mg(2+) serves as cofactor.

The protein resides in the cell membrane. It catalyses the reaction alpha-ribazole + adenosylcob(III)inamide-GDP = adenosylcob(III)alamin + GMP + H(+). It carries out the reaction alpha-ribazole 5'-phosphate + adenosylcob(III)inamide-GDP = adenosylcob(III)alamin 5'-phosphate + GMP + H(+). It functions in the pathway cofactor biosynthesis; adenosylcobalamin biosynthesis; adenosylcobalamin from cob(II)yrinate a,c-diamide: step 7/7. In terms of biological role, joins adenosylcobinamide-GDP and alpha-ribazole to generate adenosylcobalamin (Ado-cobalamin). Also synthesizes adenosylcobalamin 5'-phosphate from adenosylcobinamide-GDP and alpha-ribazole 5'-phosphate. This Haloquadratum walsbyi (strain DSM 16790 / HBSQ001) protein is Adenosylcobinamide-GDP ribazoletransferase.